The primary structure comprises 447 residues: Adenylosuccinate synthetase (447 aa).

GTP is bound by residues 12–18 (GDEGKGK) and 40–42 (GHT). Aspartate 13 (proton acceptor) is an active-site residue. Positions 13 and 40 each coordinate Mg(2+). IMP is bound by residues 13–16 (DEGK), 38–41 (NAGH), threonine 128, arginine 142, glutamine 223, threonine 238, and arginine 302. Histidine 41 functions as the Proton donor in the catalytic mechanism. 298–304 (TTTGRRR) is a binding site for substrate. Residues arginine 304, 330 to 332 (KLD), and 412 to 414 (SLG) each bind GTP.

Belongs to the adenylosuccinate synthetase family. As to quaternary structure, homodimer. It depends on Mg(2+) as a cofactor.

The protein localises to the cytoplasm. It catalyses the reaction IMP + L-aspartate + GTP = N(6)-(1,2-dicarboxyethyl)-AMP + GDP + phosphate + 2 H(+). The protein operates within purine metabolism; AMP biosynthesis via de novo pathway; AMP from IMP: step 1/2. Its function is as follows. Plays an important role in the de novo pathway of purine nucleotide biosynthesis. Catalyzes the first committed step in the biosynthesis of AMP from IMP. In Microcystis aeruginosa (strain NIES-843 / IAM M-2473), this protein is Adenylosuccinate synthetase.